A 222-amino-acid polypeptide reads, in one-letter code: Secreted protein D (222 aa).

An N-terminal signal peptide occupies residues 1 to 22; the sequence is MKIYYLFFVLIYLIYFINLVYC. N-linked (GlcNAc...) asparagine glycosylation occurs at Asn25.

Belongs to the Sct family.

The protein resides in the secreted. The chain is Secreted protein D from Dictyostelium discoideum (Social amoeba).